The chain runs to 179 residues: Large ribosomal subunit protein uL5 (179 aa).

This sequence belongs to the universal ribosomal protein uL5 family. As to quaternary structure, part of the 50S ribosomal subunit; part of the 5S rRNA/L5/L18/L25 subcomplex. Contacts the 5S rRNA and the P site tRNA. Forms a bridge to the 30S subunit in the 70S ribosome.

In terms of biological role, this is one of the proteins that bind and probably mediate the attachment of the 5S RNA into the large ribosomal subunit, where it forms part of the central protuberance. In the 70S ribosome it contacts protein S13 of the 30S subunit (bridge B1b), connecting the 2 subunits; this bridge is implicated in subunit movement. Contacts the P site tRNA; the 5S rRNA and some of its associated proteins might help stabilize positioning of ribosome-bound tRNAs. The sequence is that of Large ribosomal subunit protein uL5 from Bacillus licheniformis (strain ATCC 14580 / DSM 13 / JCM 2505 / CCUG 7422 / NBRC 12200 / NCIMB 9375 / NCTC 10341 / NRRL NRS-1264 / Gibson 46).